The sequence spans 215 residues: Probable transaldolase (215 aa).

The Schiff-base intermediate with substrate role is filled by Lys-83.

This sequence belongs to the transaldolase family. Type 3B subfamily.

It localises to the cytoplasm. It carries out the reaction D-sedoheptulose 7-phosphate + D-glyceraldehyde 3-phosphate = D-erythrose 4-phosphate + beta-D-fructose 6-phosphate. Its pathway is carbohydrate degradation; pentose phosphate pathway; D-glyceraldehyde 3-phosphate and beta-D-fructose 6-phosphate from D-ribose 5-phosphate and D-xylulose 5-phosphate (non-oxidative stage): step 2/3. Functionally, transaldolase is important for the balance of metabolites in the pentose-phosphate pathway. In Methanococcus maripaludis (strain C7 / ATCC BAA-1331), this protein is Probable transaldolase.